Consider the following 355-residue polypeptide: Uroporphyrinogen decarboxylase (355 aa).

Substrate-binding positions include 27–31 (RQAGR), Asp77, Tyr154, Thr209, and His327.

Belongs to the uroporphyrinogen decarboxylase family. As to quaternary structure, homodimer.

It localises to the cytoplasm. It catalyses the reaction uroporphyrinogen III + 4 H(+) = coproporphyrinogen III + 4 CO2. The protein operates within porphyrin-containing compound metabolism; protoporphyrin-IX biosynthesis; coproporphyrinogen-III from 5-aminolevulinate: step 4/4. Functionally, catalyzes the decarboxylation of four acetate groups of uroporphyrinogen-III to yield coproporphyrinogen-III. This is Uroporphyrinogen decarboxylase from Yersinia pseudotuberculosis serotype O:1b (strain IP 31758).